Reading from the N-terminus, the 140-residue chain is PDZ domain-containing protein 11 (140 aa).

The PDZ domain maps to Thr-47–Tyr-129.

The protein localises to the cytoplasm. In Gallus gallus (Chicken), this protein is PDZ domain-containing protein 11 (PDZD11).